Consider the following 942-residue polypeptide: Chitin synthase 2 (942 aa).

Over residues 1–13 the composition is skewed to basic and acidic residues; sequence MAYHYSHDSDRRQ. Residues 1–132 form a disordered region; that stretch reads MAYHYSHDSD…PSHTDYSDED (132 aa). Low complexity predominate over residues 18–33; it reads YNYPSNYSNPSQYSIP. The N-linked (GlcNAc...) asparagine glycan is linked to N23. Residues 71–80 are compositionally biased toward polar residues; sequence PQPTASSMTS. The N-linked (GlcNAc...) asparagine glycan is linked to N587. 4 helical membrane-spanning segments follow: residues 590–610, 625–645, 663–683, and 696–716; these read IFAA…GHGI, FNLL…FFLI, IFQV…VCSL, and FCIF…GWTV. N736 carries an N-linked (GlcNAc...) asparagine glycan. Transmembrane regions (helical) follow at residues 739–759 and 770–790; these read FVQL…SSLL and FVQY…YAMC. The N-linked (GlcNAc...) asparagine glycan is linked to N803. 2 helical membrane-spanning segments follow: residues 873 to 893 and 916 to 936; these read VVLL…SSTF and IFYA…LYLI.

Belongs to the chitin synthase family. Class III subfamily.

It is found in the cell membrane. It carries out the reaction [(1-&gt;4)-N-acetyl-beta-D-glucosaminyl](n) + UDP-N-acetyl-alpha-D-glucosamine = [(1-&gt;4)-N-acetyl-beta-D-glucosaminyl](n+1) + UDP + H(+). In terms of biological role, polymerizes chitin, a structural polymer of the cell wall and septum, by transferring the sugar moiety of UDP-GlcNAc to the non-reducing end of the growing chitin polymer. In Cryptococcus neoformans var. grubii serotype A (strain H99 / ATCC 208821 / CBS 10515 / FGSC 9487) (Filobasidiella neoformans var. grubii), this protein is Chitin synthase 2.